The chain runs to 1203 residues: Transmembrane channel-like protein 2 (1203 aa).

Disordered regions lie at residues 1–39 and 64–90; these read MPKSGAHQPLVRHDTDDGGETGQSVKSLADVSEEEIDSR and PHTRLGNPNFDDDDDEFDEEDDKEASK. Residues 73 to 86 show a composition bias toward acidic residues; it reads FDDDDDEFDEEDDK. The helical transmembrane segment at 191 to 213 threads the bilayer; the sequence is VLGVNITITFIMCMFVVIPEWLA. The N-linked (GlcNAc...) asparagine glycan is linked to asparagine 225. Transmembrane regions (helical) follow at residues 276-298, 369-391, 406-428, 441-463, 665-687, and 714-736; these read YRVPVAYFFCNIFILGFSLFIIL, FVARVLTNLFICAMYVFSIWAIM, ATAITISLITLVFPNIFDLLGKI, LGRVLVLYILNYYTLIYSLMLQL, MIWLGLFFVPLLPMLNNIKLIIL, and FFFALLILFLFLCTLPVGFVIAS. Asparagine 748 carries an N-linked (GlcNAc...) asparagine glycan. Residues 780-802 traverse the membrane as a helical segment; sequence IIIPVLVLLSLVIYFLIAMVTGL. Disordered regions lie at residues 826-908, 927-1039, 1059-1087, and 1112-1203; these read ELAG…SLPP, KYGR…IEKQ, ATVENSSQDPTRPPSTDDSLGDPALHEPL, and NDET…SDND. The span at 865-874 shows a compositional bias: polar residues; sequence NRSTAKSVSG. Low complexity predominate over residues 898-908; it reads DSESTTSSLPP. The span at 927–945 shows a compositional bias: basic and acidic residues; that stretch reads KYGRHDDIEMEEGGGRLRE. Low complexity-rich tracts occupy residues 973–997 and 1022–1035; these read QSFDQNSQSASASSSKSTTTAPSNS and SASSSSSSHQPSSS. Polar residues predominate over residues 1061–1076; it reads VENSSQDPTRPPSTDD. Basic and acidic residues-rich tracts occupy residues 1133–1147 and 1172–1203; these read SPRELKRLKREKDQQ and PPSEKNDSDSSNRKYEMRVEKSPKKPKKSDND.

The protein belongs to the TMC family.

The protein resides in the membrane. Its function is as follows. Probable ion channel. In Caenorhabditis elegans, this protein is Transmembrane channel-like protein 2 (tmc-2).